Consider the following 20-residue polypeptide: Putative antimicrobial protein 2 (20 aa).

The segment at 1–20 (DLPECCSATELELDSGKQTS) is disordered.

Its function is as follows. May have antimicrobial activity. The chain is Putative antimicrobial protein 2 from Cenchritis muricatus (Beaded periwinkle).